We begin with the raw amino-acid sequence, 1365 residues long: Nuclear pore complex protein Nup154 (1365 aa).

Residues 1-508 are required for binding to Nup93-1 and anchoring to the nuclear pore complex; that stretch reads MTLPQAQLDF…GTHIIEVLKM (508 aa). The required for binding to chromatin stretch occupies residues 508-986; the sequence is MVDVLRQILL…KSINPLKGTA (479 aa).

The protein belongs to the non-repetitive/WGA-negative nucleoporin family. As to quaternary structure, interacts (via N-terminus) with Nup93-1. Interacts with Nup35. Interacts with cup.

The protein resides in the nucleus. It is found in the nuclear pore complex. It localises to the chromosome. Its subcellular location is the nucleus membrane. The protein localises to the cytoplasm. Functionally, component of the nuclear pore complex. Has a role in the organization of the inner nuclear membrane proteins at the nuclear envelope. In germ cells, plays a role in the nuclear localization of components of the dpp signaling pathways, such as Medea and phosphorylated Mad. Binds to chromatin, and together with Nup62 and Nup93-1, contributes to karyosome morphology and chromatin organization including attachment to the nuclear envelope in oocytes and nurse cells. Has a role in female fertility including egg chamber development; in nurse cells, has a role in the organization of F-actin in subcortical and cytoplasmic actin filaments important for the transfer of cytoplasm from nurse cells to the growing oocytes. Has a role in male spermatogenesis and fertility. Has a role in germ line cell proliferation. In Drosophila melanogaster (Fruit fly), this protein is Nuclear pore complex protein Nup154.